The sequence spans 54 residues: Small ribosomal subunit protein uS14 (54 aa).

Zn(2+) contacts are provided by Cys19, Cys22, Cys37, and Cys40.

This sequence belongs to the universal ribosomal protein uS14 family. Zinc-binding uS14 subfamily. In terms of assembly, part of the 30S ribosomal subunit. It depends on Zn(2+) as a cofactor.

Binds 16S rRNA, required for the assembly of 30S particles. The sequence is that of Small ribosomal subunit protein uS14 from Saccharolobus solfataricus (strain ATCC 35092 / DSM 1617 / JCM 11322 / P2) (Sulfolobus solfataricus).